The sequence spans 342 residues: Ketol-acid reductoisomerase (NADP(+)) (342 aa).

A KARI N-terminal Rossmann domain is found at 2–182 (AELFYDDDAD…GGLRAAGIKT (181 aa)). NADP(+) contacts are provided by residues 25 to 28 (YGSQ), Arg-48, Ser-51, Ser-53, and 83 to 86 (DQHQ). His-108 is a catalytic residue. Gly-134 is a binding site for NADP(+). Positions 183–328 (TFTEETETDL…RELRKLFAWV (146 aa)) constitute a KARI C-terminal knotted domain. Residues Asp-191, Glu-195, Glu-227, and Glu-231 each coordinate Mg(2+). Residue Ser-252 participates in substrate binding.

It belongs to the ketol-acid reductoisomerase family. It depends on Mg(2+) as a cofactor.

The enzyme catalyses (2R)-2,3-dihydroxy-3-methylbutanoate + NADP(+) = (2S)-2-acetolactate + NADPH + H(+). The catalysed reaction is (2R,3R)-2,3-dihydroxy-3-methylpentanoate + NADP(+) = (S)-2-ethyl-2-hydroxy-3-oxobutanoate + NADPH + H(+). The protein operates within amino-acid biosynthesis; L-isoleucine biosynthesis; L-isoleucine from 2-oxobutanoate: step 2/4. It participates in amino-acid biosynthesis; L-valine biosynthesis; L-valine from pyruvate: step 2/4. Involved in the biosynthesis of branched-chain amino acids (BCAA). Catalyzes an alkyl-migration followed by a ketol-acid reduction of (S)-2-acetolactate (S2AL) to yield (R)-2,3-dihydroxy-isovalerate. In the isomerase reaction, S2AL is rearranged via a Mg-dependent methyl migration to produce 3-hydroxy-3-methyl-2-ketobutyrate (HMKB). In the reductase reaction, this 2-ketoacid undergoes a metal-dependent reduction by NADPH to yield (R)-2,3-dihydroxy-isovalerate. This Beutenbergia cavernae (strain ATCC BAA-8 / DSM 12333 / CCUG 43141 / JCM 11478 / NBRC 16432 / NCIMB 13614 / HKI 0122) protein is Ketol-acid reductoisomerase (NADP(+)).